A 244-amino-acid polypeptide reads, in one-letter code: MNILILDDEMLARQELTFLIQQSKELDHPDIFEAEDISSAEKILFRQQIDLIFLDISLSEENGFTLANQLEQLAHPPLVVFATAYDHYAVKAFESNAADYILKPFEQGRVDKALAKVKKIQHLSTIDETATTEKKGMELLTLTLADRSIVLKMPDIVAASIEDGELTVSTKNTSYTIKKTLNWFKTRAKTNYFLQIHRNTVVNLEMIQEIQPWFNHTLLLVMVNGEKFPVGRSYMKELNAHLTL.

The Response regulatory domain occupies 2–118 (NILILDDEML…RVDKALAKVK (117 aa)). Position 55 is a 4-aspartylphosphate (Asp-55). The region spanning 140 to 244 (LTLTLADRSI…MKELNAHLTL (105 aa)) is the HTH LytTR-type domain.

Post-translationally, phosphorylated by LytS.

It is found in the cytoplasm. Member of the two-component regulatory system LytR/LytS that probably regulates genes involved in cell wall metabolism. This chain is Sensory transduction protein LytR (lytR), found in Streptococcus mutans serotype c (strain ATCC 700610 / UA159).